The primary structure comprises 426 residues: D-tagatose-1,6-bisphosphate aldolase subunit KbaZ (426 aa).

It belongs to the GatZ/KbaZ family. KbaZ subfamily. Forms a complex with KbaY.

Its pathway is carbohydrate metabolism; D-tagatose 6-phosphate degradation; D-glyceraldehyde 3-phosphate and glycerone phosphate from D-tagatose 6-phosphate: step 2/2. Its function is as follows. Component of the tagatose-1,6-bisphosphate aldolase KbaYZ that is required for full activity and stability of the Y subunit. Could have a chaperone-like function for the proper and stable folding of KbaY. When expressed alone, KbaZ does not show any aldolase activity. The sequence is that of D-tagatose-1,6-bisphosphate aldolase subunit KbaZ from Escherichia coli O1:K1 / APEC.